A 333-amino-acid polypeptide reads, in one-letter code: Glycerol-3-phosphate dehydrogenase [NAD(P)+] (333 aa).

Positions 10, 11, 31, and 105 each coordinate NADPH. Positions 105, 136, and 138 each coordinate sn-glycerol 3-phosphate. Alanine 140 lines the NADPH pocket. Lysine 191, aspartate 244, serine 254, arginine 255, and asparagine 256 together coordinate sn-glycerol 3-phosphate. The active-site Proton acceptor is lysine 191. Arginine 255 contributes to the NADPH binding site. Valine 279 and glutamate 281 together coordinate NADPH.

The protein belongs to the NAD-dependent glycerol-3-phosphate dehydrogenase family.

It localises to the cytoplasm. It catalyses the reaction sn-glycerol 3-phosphate + NAD(+) = dihydroxyacetone phosphate + NADH + H(+). It carries out the reaction sn-glycerol 3-phosphate + NADP(+) = dihydroxyacetone phosphate + NADPH + H(+). Its pathway is membrane lipid metabolism; glycerophospholipid metabolism. In terms of biological role, catalyzes the reduction of the glycolytic intermediate dihydroxyacetone phosphate (DHAP) to sn-glycerol 3-phosphate (G3P), the key precursor for phospholipid synthesis. In Leptospira biflexa serovar Patoc (strain Patoc 1 / Ames), this protein is Glycerol-3-phosphate dehydrogenase [NAD(P)+].